The chain runs to 207 residues: Enolase (207 aa).

Gln162 is a (2R)-2-phosphoglycerate binding site. Glu204 serves as the catalytic Proton donor.

The protein belongs to the enolase family.

Its subcellular location is the cytoplasm. It is found in the secreted. It localises to the cell surface. It catalyses the reaction (2R)-2-phosphoglycerate = phosphoenolpyruvate + H2O. It functions in the pathway carbohydrate degradation; glycolysis; pyruvate from D-glyceraldehyde 3-phosphate: step 4/5. Functionally, catalyzes the reversible conversion of 2-phosphoglycerate (2-PG) into phosphoenolpyruvate (PEP). It is essential for the degradation of carbohydrates via glycolysis. The chain is Enolase from Campylobacter fetus.